A 246-amino-acid polypeptide reads, in one-letter code: Lipoprotein-releasing system ATP-binding protein LolD 1 (246 aa).

The 239-residue stretch at 6 to 244 (LKLERIRKDL…ASVTNEAASL (239 aa)) folds into the ABC transporter domain. 43 to 50 (GPSGSGKS) contacts ATP.

Belongs to the ABC transporter superfamily. Lipoprotein translocase (TC 3.A.1.125) family. In terms of assembly, the complex is composed of two ATP-binding proteins (LolD) and two transmembrane proteins (LolC and LolE).

Its subcellular location is the cell inner membrane. Its function is as follows. Part of the ABC transporter complex LolCDE involved in the translocation of mature outer membrane-directed lipoproteins, from the inner membrane to the periplasmic chaperone, LolA. Responsible for the formation of the LolA-lipoprotein complex in an ATP-dependent manner. The sequence is that of Lipoprotein-releasing system ATP-binding protein LolD 1 from Chlorobium chlorochromatii (strain CaD3).